A 199-amino-acid polypeptide reads, in one-letter code: Peptidyl-tRNA hydrolase (199 aa).

A tRNA-binding site is contributed by Tyr-15. His-20 functions as the Proton acceptor in the catalytic mechanism. TRNA contacts are provided by Phe-66, Asn-68, and Asn-114.

This sequence belongs to the PTH family. In terms of assembly, monomer.

It localises to the cytoplasm. The enzyme catalyses an N-acyl-L-alpha-aminoacyl-tRNA + H2O = an N-acyl-L-amino acid + a tRNA + H(+). In terms of biological role, hydrolyzes ribosome-free peptidyl-tRNAs (with 1 or more amino acids incorporated), which drop off the ribosome during protein synthesis, or as a result of ribosome stalling. Catalyzes the release of premature peptidyl moieties from peptidyl-tRNA molecules trapped in stalled 50S ribosomal subunits, and thus maintains levels of free tRNAs and 50S ribosomes. The protein is Peptidyl-tRNA hydrolase of Cupriavidus pinatubonensis (strain JMP 134 / LMG 1197) (Cupriavidus necator (strain JMP 134)).